A 121-amino-acid chain; its full sequence is Histone H2B (121 aa).

Positions 1–27 (MAPKKAPAAAEKKVKKAPTTEKKNKKK) are disordered. At Ala2 the chain carries N,N,N-trimethylalanine. Residues Lys5 and Lys41 each carry the N6-acetyllysine modification. Residue Lys115 forms a Glycyl lysine isopeptide (Lys-Gly) (interchain with G-Cter in ubiquitin) linkage.

Belongs to the histone H2B family. As to quaternary structure, the nucleosome is a histone octamer containing two molecules each of H2A, H2B, H3 and H4 assembled in one H3-H4 heterotetramer and two H2A-H2B heterodimers. The octamer wraps approximately 147 bp of DNA. Post-translationally, monoubiquitination of Lys-115 gives a specific tag for epigenetic transcriptional activation and is also prerequisite for histone H3 'Lys-4' and 'Lys-79' methylation. Acetylation occurs almost exclusively in the MAC.

Its subcellular location is the nucleus. It localises to the chromosome. Functionally, core component of nucleosome. Nucleosomes wrap and compact DNA into chromatin, limiting DNA accessibility to the cellular machineries which require DNA as a template. Histones thereby play a central role in transcription regulation, DNA repair, DNA replication and chromosomal stability. DNA accessibility is regulated via a complex set of post-translational modifications of histones, also called histone code, and nucleosome remodeling. The protein is Histone H2B of Tetrahymena pyriformis.